The sequence spans 293 residues: 4-diphosphocytidyl-2-C-methyl-D-erythritol kinase (293 aa).

Residue K16 is part of the active site. P99–S109 contacts ATP. The active site involves D141.

It belongs to the GHMP kinase family. IspE subfamily.

It carries out the reaction 4-CDP-2-C-methyl-D-erythritol + ATP = 4-CDP-2-C-methyl-D-erythritol 2-phosphate + ADP + H(+). Its pathway is isoprenoid biosynthesis; isopentenyl diphosphate biosynthesis via DXP pathway; isopentenyl diphosphate from 1-deoxy-D-xylulose 5-phosphate: step 3/6. Functionally, catalyzes the phosphorylation of the position 2 hydroxy group of 4-diphosphocytidyl-2C-methyl-D-erythritol. The chain is 4-diphosphocytidyl-2-C-methyl-D-erythritol kinase from Burkholderia multivorans (strain ATCC 17616 / 249).